Reading from the N-terminus, the 261-residue chain is 3-methyl-2-oxobutanoate hydroxymethyltransferase (261 aa).

Mg(2+) contacts are provided by Asp-42 and Asp-81. 3-methyl-2-oxobutanoate contacts are provided by residues 42 to 43 (DS), Asp-81, and Lys-110. Mg(2+) is bound at residue Glu-112. The active-site Proton acceptor is Glu-179.

It belongs to the PanB family. In terms of assembly, homodecamer; pentamer of dimers. Mg(2+) is required as a cofactor.

The protein localises to the cytoplasm. The enzyme catalyses 3-methyl-2-oxobutanoate + (6R)-5,10-methylene-5,6,7,8-tetrahydrofolate + H2O = 2-dehydropantoate + (6S)-5,6,7,8-tetrahydrofolate. It functions in the pathway cofactor biosynthesis; coenzyme A biosynthesis. Functionally, catalyzes the reversible reaction in which hydroxymethyl group from 5,10-methylenetetrahydrofolate is transferred onto alpha-ketoisovalerate to form ketopantoate. The polypeptide is 3-methyl-2-oxobutanoate hydroxymethyltransferase (Pyrobaculum islandicum (strain DSM 4184 / JCM 9189 / GEO3)).